The primary structure comprises 72 residues: Alpha-elapitoxin-Dpp2c (72 aa).

Disulfide bonds link C3–C21, C14–C42, C27–C31, C46–C57, and C58–C63.

This sequence belongs to the three-finger toxin family. Long-chain subfamily. Type II alpha-neurotoxin sub-subfamily. In terms of tissue distribution, expressed by the venom gland.

It is found in the secreted. Functionally, binds with high affinity to muscular (alpha-1/CHRNA1) and neuronal (alpha-7/CHRNA7) nicotinic acetylcholine receptor (nAChR) and inhibits acetylcholine from binding to the receptor, thereby impairing neuromuscular and neuronal transmission. The chain is Alpha-elapitoxin-Dpp2c from Dendroaspis polylepis polylepis (Black mamba).